We begin with the raw amino-acid sequence, 188 residues long: UPF0461 protein C5orf24 homolog (188 aa).

At Ser-37 the chain carries Phosphoserine. Lys-75 participates in a covalent cross-link: Glycyl lysine isopeptide (Lys-Gly) (interchain with G-Cter in SUMO2). The span at 80–92 (KKKNLNRSGKRGR) shows a compositional bias: basic residues. The tract at residues 80–141 (KKKNLNRSGK…AGYKVSPGRP (62 aa)) is disordered. A compositionally biased stretch (polar residues) spans 94–107 (SGTTKSAGYRTSTG). Ser-121 and Ser-180 each carry phosphoserine. Lys-184 participates in a covalent cross-link: Glycyl lysine isopeptide (Lys-Gly) (interchain with G-Cter in SUMO2).

This sequence belongs to the UPF0461 family.

This chain is UPF0461 protein C5orf24 homolog, found in Mus musculus (Mouse).